Consider the following 358-residue polypeptide: Protein-glutamate methylesterase/protein-glutamine glutaminase (358 aa).

Residues 5 to 122 form the Response regulatory domain; that stretch reads SVLIIDDSAL…RNSLEAYTDE (118 aa). The residue at position 56 (Asp56) is a 4-aspartylphosphate. Residues 159 to 351 enclose the CheB-type methylesterase domain; it reads GISTEKLIII…RRILARLVGA (193 aa). Residues Ser171, His197, and Asp293 contribute to the active site.

Belongs to the CheB family. In terms of processing, phosphorylated by CheA. Phosphorylation of the N-terminal regulatory domain activates the methylesterase activity.

It localises to the cytoplasm. The enzyme catalyses [protein]-L-glutamate 5-O-methyl ester + H2O = L-glutamyl-[protein] + methanol + H(+). It catalyses the reaction L-glutaminyl-[protein] + H2O = L-glutamyl-[protein] + NH4(+). Functionally, involved in chemotaxis. Part of a chemotaxis signal transduction system that modulates chemotaxis in response to various stimuli. Catalyzes the demethylation of specific methylglutamate residues introduced into the chemoreceptors (methyl-accepting chemotaxis proteins or MCP) by CheR. Also mediates the irreversible deamidation of specific glutamine residues to glutamic acid. The protein is Protein-glutamate methylesterase/protein-glutamine glutaminase of Nitrosomonas europaea (strain ATCC 19718 / CIP 103999 / KCTC 2705 / NBRC 14298).